The primary structure comprises 289 residues: Bis(5'-nucleosyl)-tetraphosphatase, symmetrical (289 aa).

The protein belongs to the Ap4A hydrolase family.

The catalysed reaction is P(1),P(4)-bis(5'-adenosyl) tetraphosphate + H2O = 2 ADP + 2 H(+). Functionally, hydrolyzes diadenosine 5',5'''-P1,P4-tetraphosphate to yield ADP. In Yersinia pseudotuberculosis serotype O:1b (strain IP 31758), this protein is Bis(5'-nucleosyl)-tetraphosphatase, symmetrical.